Reading from the N-terminus, the 882-residue chain is DNA mismatch repair protein MutS (882 aa).

629-636 contacts ATP; the sequence is GPNMGGKS.

It belongs to the DNA mismatch repair MutS family.

Its function is as follows. This protein is involved in the repair of mismatches in DNA. It is possible that it carries out the mismatch recognition step. This protein has a weak ATPase activity. This Ralstonia nicotianae (strain ATCC BAA-1114 / GMI1000) (Ralstonia solanacearum) protein is DNA mismatch repair protein MutS.